The primary structure comprises 367 residues: MSLADSVLAINNDLPIRTDSPVHSGKVRSVYWLTDADSRRLITTKGYNVPEDTPLAIMVISDRISAFDCIFHGEGGLKGIPGKGAALNAISNHWFKLFAENGLADSHILDIPHPFVWIVQKARPIKVEAICRQYITGSMWRAYSKGERVFCGITLPEGLEKDQKLPELLITPSTKGILTGIPGVPAQDDVNISRSDIEANYQAFGFEKLEDIDLYEKLLKDGFKVISKALADIDQVFVDTKFEFGYVTDKDGNSKLIYMDEVGTPDSSRIWDGAAYRDGKILENSKEGFRQFLLNHFPDPDVLLNKDRMPEREALARDNDLPLEAMMQVSRTYTGVAEKVTGAPIPLPANPKADIIKILREEYDLIV.

This sequence belongs to the SAICAR synthetase family.

It carries out the reaction 5-amino-1-(5-phospho-D-ribosyl)imidazole-4-carboxylate + L-aspartate + ATP = (2S)-2-[5-amino-1-(5-phospho-beta-D-ribosyl)imidazole-4-carboxamido]succinate + ADP + phosphate + 2 H(+). It participates in purine metabolism; IMP biosynthesis via de novo pathway; 5-amino-1-(5-phospho-D-ribosyl)imidazole-4-carboxamide from 5-amino-1-(5-phospho-D-ribosyl)imidazole-4-carboxylate: step 1/2. This is Phosphoribosylaminoimidazole-succinocarboxamide synthase from Shewanella baltica (strain OS185).